A 192-amino-acid chain; its full sequence is 3-isopropylmalate dehydratase small subunit (192 aa).

This sequence belongs to the LeuD family. LeuD type 1 subfamily. In terms of assembly, heterodimer of LeuC and LeuD.

It catalyses the reaction (2R,3S)-3-isopropylmalate = (2S)-2-isopropylmalate. It participates in amino-acid biosynthesis; L-leucine biosynthesis; L-leucine from 3-methyl-2-oxobutanoate: step 2/4. Its function is as follows. Catalyzes the isomerization between 2-isopropylmalate and 3-isopropylmalate, via the formation of 2-isopropylmaleate. The protein is 3-isopropylmalate dehydratase small subunit of Oceanobacillus iheyensis (strain DSM 14371 / CIP 107618 / JCM 11309 / KCTC 3954 / HTE831).